Here is a 128-residue protein sequence, read N- to C-terminus: Large ribosomal subunit protein eL8 (128 aa).

This sequence belongs to the eukaryotic ribosomal protein eL8 family. Part of the 50S ribosomal subunit. Probably part of the RNase P complex.

It localises to the cytoplasm. Multifunctional RNA-binding protein that recognizes the K-turn motif in ribosomal RNA, the RNA component of RNase P, box H/ACA, box C/D and box C'/D' sRNAs. This Staphylothermus marinus (strain ATCC 43588 / DSM 3639 / JCM 9404 / F1) protein is Large ribosomal subunit protein eL8.